The primary structure comprises 220 residues: Ribonuclease HII (220 aa).

The 189-residue stretch at 32-220 (KHIAGIDEAG…FAPIKGRFDC (189 aa)) folds into the RNase H type-2 domain. A divalent metal cation is bound by residues aspartate 38, glutamate 39, and aspartate 130.

It belongs to the RNase HII family. Mn(2+) serves as cofactor. The cofactor is Mg(2+).

Its subcellular location is the cytoplasm. The catalysed reaction is Endonucleolytic cleavage to 5'-phosphomonoester.. Functionally, endonuclease that specifically degrades the RNA of RNA-DNA hybrids. This Brucella suis (strain ATCC 23445 / NCTC 10510) protein is Ribonuclease HII.